Reading from the N-terminus, the 301-residue chain is Ribonuclease H2 subunit A (301 aa).

At Met1 the chain carries N-acetylmethionine. An RNase H type-2 domain is found at 28–251 (PCVLGVDEAG…AQAILEKEAE (224 aa)). A divalent metal cation is bound by residues Asp34, Glu35, and Asp142. Phosphothreonine is present on Thr217. The segment covering 255-264 (WEDSEAEEDP) has biased composition (acidic residues). The tract at residues 255-284 (WEDSEAEEDPERPGKITSYFSQGPQTCRPQ) is disordered. Ser258 is subject to Phosphoserine. Residues 272 to 282 (SYFSQGPQTCR) show a composition bias toward polar residues.

This sequence belongs to the RNase HII family. Eukaryotic subfamily. As to quaternary structure, the RNase H2 complex is a heterotrimer composed of the catalytic subunit RNASEH2A and the non-catalytic subunits RNASEH2B and RNASEH2C. Mn(2+) is required as a cofactor. Mg(2+) serves as cofactor.

It localises to the nucleus. The catalysed reaction is Endonucleolytic cleavage to 5'-phosphomonoester.. Catalytic subunit of RNase HII, an endonuclease that specifically degrades the RNA of RNA:DNA hybrids. Participates in DNA replication, possibly by mediating the removal of lagging-strand Okazaki fragment RNA primers during DNA replication. Mediates the excision of single ribonucleotides from DNA:RNA duplexes. This chain is Ribonuclease H2 subunit A (Rnaseh2a), found in Mus musculus (Mouse).